The sequence spans 290 residues: GTPase Era (290 aa).

The Era-type G domain occupies 2-144 (KVLKVGVLGP…AIILEEFKPQ (143 aa)). The G1 stretch occupies residues 10–17 (GPTNAGKS). Residue 10–17 (GPTNAGKS) participates in GTP binding. Residues 36-40 (NTTLL) are G2. Residues 58–61 (DVPG) are G3. Position 58 to 62 (58 to 62 (DVPGF)) interacts with GTP. Residues 97 to 100 (NKIE) are G4. The G5 stretch occupies residues 121-123 (INK). 122 to 125 (NKFH) provides a ligand contact to GTP. The KH type-2 domain maps to 201 to 279 (CKNEIPHIAR…FIDIFVKTEK (79 aa)).

Belongs to the TRAFAC class TrmE-Era-EngA-EngB-Septin-like GTPase superfamily. Era GTPase family. Monomer.

It is found in the cytoplasm. Its subcellular location is the cell membrane. Functionally, an essential GTPase that binds both GDP and GTP, with rapid nucleotide exchange. Plays a role in 16S rRNA processing and 30S ribosomal subunit biogenesis and possibly also in cell cycle regulation and energy metabolism. The sequence is that of GTPase Era from Mycoplasma genitalium (strain ATCC 33530 / DSM 19775 / NCTC 10195 / G37) (Mycoplasmoides genitalium).